The sequence spans 258 residues: Imidazole glycerol phosphate synthase subunit HisF (258 aa).

Catalysis depends on residues D11 and D130.

The protein belongs to the HisA/HisF family. As to quaternary structure, heterodimer of HisH and HisF.

It is found in the cytoplasm. It catalyses the reaction 5-[(5-phospho-1-deoxy-D-ribulos-1-ylimino)methylamino]-1-(5-phospho-beta-D-ribosyl)imidazole-4-carboxamide + L-glutamine = D-erythro-1-(imidazol-4-yl)glycerol 3-phosphate + 5-amino-1-(5-phospho-beta-D-ribosyl)imidazole-4-carboxamide + L-glutamate + H(+). It participates in amino-acid biosynthesis; L-histidine biosynthesis; L-histidine from 5-phospho-alpha-D-ribose 1-diphosphate: step 5/9. In terms of biological role, IGPS catalyzes the conversion of PRFAR and glutamine to IGP, AICAR and glutamate. The HisF subunit catalyzes the cyclization activity that produces IGP and AICAR from PRFAR using the ammonia provided by the HisH subunit. The protein is Imidazole glycerol phosphate synthase subunit HisF of Cronobacter sakazakii (strain ATCC BAA-894) (Enterobacter sakazakii).